Reading from the N-terminus, the 56-residue chain is Large ribosomal subunit protein eL37 (56 aa).

Zn(2+)-binding residues include Cys19, Cys22, Cys34, and Cys37. The segment at Cys19–Cys37 adopts a C4-type zinc-finger fold.

Belongs to the eukaryotic ribosomal protein eL37 family. Zn(2+) serves as cofactor.

Functionally, binds to the 23S rRNA. The polypeptide is Large ribosomal subunit protein eL37 (Methanococcoides burtonii (strain DSM 6242 / NBRC 107633 / OCM 468 / ACE-M)).